Here is a 242-residue protein sequence, read N- to C-terminus: Small ribosomal subunit protein uS2 (242 aa).

The protein belongs to the universal ribosomal protein uS2 family.

The chain is Small ribosomal subunit protein uS2 from Shewanella amazonensis (strain ATCC BAA-1098 / SB2B).